The chain runs to 379 residues: Glutamate 5-kinase (379 aa).

Position 15 (lysine 15) interacts with ATP. Residues serine 59, aspartate 146, and asparagine 158 each coordinate substrate. An ATP-binding site is contributed by 178–179 (TD). A PUA domain is found at 285-363 (RGAVTVDVGA…SEFERLLGYS (79 aa)).

The protein belongs to the glutamate 5-kinase family.

The protein resides in the cytoplasm. The catalysed reaction is L-glutamate + ATP = L-glutamyl 5-phosphate + ADP. Its pathway is amino-acid biosynthesis; L-proline biosynthesis; L-glutamate 5-semialdehyde from L-glutamate: step 1/2. Its function is as follows. Catalyzes the transfer of a phosphate group to glutamate to form L-glutamate 5-phosphate. The polypeptide is Glutamate 5-kinase (Paracidovorax citrulli (strain AAC00-1) (Acidovorax citrulli)).